Here is a 957-residue protein sequence, read N- to C-terminus: Vacuolar membrane protease (957 aa).

Over 1–10 (MARYNPFSFT) the chain is Cytoplasmic. A helical transmembrane segment spans residues 11-31 (PGPVVFFTTVIYVGLFAALLV). Residues 32 to 369 (THLTVPDYPS…RVFVVFQLHT (338 aa)) lie on the Vacuolar side of the membrane. N48, N105, and N136 each carry an N-linked (GlcNAc...) asparagine glycan. Residues H152 and D164 each coordinate Zn(2+). Residue E198 is the Proton acceptor of the active site. Zn(2+) is bound by residues E199, E224, and H297. A helical membrane pass occupies residues 370 to 390 (LFALCVTLLVVAPITLIGLTF). Residues 391-423 (GLSKADKNYLLARKAFVYSSDDDNPVQLYGWRG) lie on the Cytoplasmic side of the membrane. The helical transmembrane segment at 424–444 (FFRFPIIFISATAVVVALAYL) threads the bilayer. The Vacuolar segment spans residues 445–450 (LVRFNA). The chain crosses the membrane as a helical span at residues 451 to 471 (FIIYSSPFAVWSMMLSAWFFV). At 472 to 490 (AWFFSRGADAMRPSALQRM) the chain is on the cytoplasmic side. The helical transmembrane segment at 491-511 (YALIWLFIGSFVLLTIVTVFV) threads the bilayer. At 512–521 (NNYQVVAGYP) the chain is on the vacuolar side. The helical transmembrane segment at 522-542 (ALFYFAVVFVAIMLSYLELFF) threads the bilayer. Over 543–642 (APTKSAYARH…YPGEQEWSGK (100 aa)) the chain is Cytoplasmic. Disordered regions lie at residues 559-586 (SRRN…PVAD) and 603-627 (FTRY…SQRL). A compositionally biased stretch (basic and acidic residues) spans 603-613 (FTRYGSRRDSA). Residues 643 to 663 (LPSWIWIIQLLLLAPLVIVLV) form a helical membrane-spanning segment. At 664 to 685 (GQVALLLTSALYQTPSDGNSPL) the chain is on the vacuolar side. A helical transmembrane segment spans residues 686–706 (FIYLAIAALSVLLLAPTGPFI). Over 707–713 (HRFTYHV) the chain is Cytoplasmic. Residues 714–734 (PTFLFLVCLGTVIYNLVAFPF) form a helical membrane-spanning segment. Residues 735 to 957 (SRDHRLKVYF…LVEGFKRFEI (223 aa)) lie on the Vacuolar side of the membrane. Residues N782, N818, and N834 are each glycosylated (N-linked (GlcNAc...) asparagine).

The protein belongs to the peptidase M28 family. Zn(2+) is required as a cofactor.

The protein resides in the vacuole membrane. May be involved in vacuolar sorting and osmoregulation. This Pyrenophora teres f. teres (strain 0-1) (Barley net blotch fungus) protein is Vacuolar membrane protease.